The sequence spans 1479 residues: DNA-directed RNA polymerase subunit beta'' (1479 aa).

4 residues coordinate Zn(2+): C220, C296, C303, and C306. 2 disordered regions span residues 618–640 (TRAE…REDE) and 663–756 (LEDE…KKEG). Composition is skewed to acidic residues over residues 622-631 (DSEEEYETLE), 704-717 (DEYG…EDEY), and 731-749 (LEED…PEED).

The protein belongs to the RNA polymerase beta' chain family. RpoC2 subfamily. In terms of assembly, in plastids the minimal PEP RNA polymerase catalytic core is composed of four subunits: alpha, beta, beta', and beta''. When a (nuclear-encoded) sigma factor is associated with the core the holoenzyme is formed, which can initiate transcription. Requires Zn(2+) as cofactor.

The protein resides in the plastid. The protein localises to the chloroplast. The catalysed reaction is RNA(n) + a ribonucleoside 5'-triphosphate = RNA(n+1) + diphosphate. DNA-dependent RNA polymerase catalyzes the transcription of DNA into RNA using the four ribonucleoside triphosphates as substrates. This Triticum aestivum (Wheat) protein is DNA-directed RNA polymerase subunit beta''.